The following is a 249-amino-acid chain: NADH-quinone oxidoreductase subunit C (249 aa).

This sequence belongs to the complex I 30 kDa subunit family. As to quaternary structure, NDH-1 is composed of 14 different subunits. Subunits NuoB, C, D, E, F, and G constitute the peripheral sector of the complex.

The protein resides in the cell inner membrane. It catalyses the reaction a quinone + NADH + 5 H(+)(in) = a quinol + NAD(+) + 4 H(+)(out). Its function is as follows. NDH-1 shuttles electrons from NADH, via FMN and iron-sulfur (Fe-S) centers, to quinones in the respiratory chain. The immediate electron acceptor for the enzyme in this species is believed to be ubiquinone. Couples the redox reaction to proton translocation (for every two electrons transferred, four hydrogen ions are translocated across the cytoplasmic membrane), and thus conserves the redox energy in a proton gradient. The chain is NADH-quinone oxidoreductase subunit C from Stenotrophomonas maltophilia (strain R551-3).